The primary structure comprises 182 residues: Ribosome-recycling factor (182 aa).

This sequence belongs to the RRF family.

It is found in the cytoplasm. In terms of biological role, responsible for the release of ribosomes from messenger RNA at the termination of protein biosynthesis. May increase the efficiency of translation by recycling ribosomes from one round of translation to another. This is Ribosome-recycling factor from Synechocystis sp. (strain ATCC 27184 / PCC 6803 / Kazusa).